Here is a 544-residue protein sequence, read N- to C-terminus: CTP synthase (544 aa).

The tract at residues 1 to 267 (MAKFVFITGG…AQRVLQILNL (267 aa)) is amidoligase domain. Serine 13 provides a ligand contact to CTP. Residue serine 13 participates in UTP binding. 14 to 19 (SIGKGI) provides a ligand contact to ATP. L-glutamine is bound at residue tyrosine 54. An ATP-binding site is contributed by aspartate 71. Positions 71 and 141 each coordinate Mg(2+). CTP is bound by residues 148–150 (DIE), 188–193 (KTKPTQ), and lysine 224. Residues 188 to 193 (KTKPTQ) and lysine 224 each bind UTP. A Glutamine amidotransferase type-1 domain is found at 292–534 (EIAIVGKYVR…IEAALRSRSR (243 aa)). Position 354 (glycine 354) interacts with L-glutamine. Cysteine 381 serves as the catalytic Nucleophile; for glutamine hydrolysis. L-glutamine-binding positions include 382–385 (LGMQ), glutamate 405, and arginine 462. Active-site residues include histidine 507 and glutamate 509.

The protein belongs to the CTP synthase family. As to quaternary structure, homotetramer.

The catalysed reaction is UTP + L-glutamine + ATP + H2O = CTP + L-glutamate + ADP + phosphate + 2 H(+). The enzyme catalyses L-glutamine + H2O = L-glutamate + NH4(+). It catalyses the reaction UTP + NH4(+) + ATP = CTP + ADP + phosphate + 2 H(+). It participates in pyrimidine metabolism; CTP biosynthesis via de novo pathway; CTP from UDP: step 2/2. With respect to regulation, allosterically activated by GTP, when glutamine is the substrate; GTP has no effect on the reaction when ammonia is the substrate. The allosteric effector GTP functions by stabilizing the protein conformation that binds the tetrahedral intermediate(s) formed during glutamine hydrolysis. Inhibited by the product CTP, via allosteric rather than competitive inhibition. Functionally, catalyzes the ATP-dependent amination of UTP to CTP with either L-glutamine or ammonia as the source of nitrogen. Regulates intracellular CTP levels through interactions with the four ribonucleotide triphosphates. This Synechococcus sp. (strain JA-3-3Ab) (Cyanobacteria bacterium Yellowstone A-Prime) protein is CTP synthase.